The sequence spans 306 residues: UDP-N-acetylenolpyruvoylglucosamine reductase (306 aa).

Positions 34-198 (VGGPADLLIT…LEVTFKLHNS (165 aa)) constitute an FAD-binding PCMH-type domain. The active site involves Arg-177. Catalysis depends on Ser-227, which acts as the Proton donor. Glu-297 is an active-site residue.

It belongs to the MurB family. FAD serves as cofactor.

The protein localises to the cytoplasm. The catalysed reaction is UDP-N-acetyl-alpha-D-muramate + NADP(+) = UDP-N-acetyl-3-O-(1-carboxyvinyl)-alpha-D-glucosamine + NADPH + H(+). Its pathway is cell wall biogenesis; peptidoglycan biosynthesis. Functionally, cell wall formation. The chain is UDP-N-acetylenolpyruvoylglucosamine reductase from Clostridium botulinum (strain 657 / Type Ba4).